The following is a 636-amino-acid chain: Asparagine synthetase domain-containing protein 1 (636 aa).

The active-site Nucleophile is cysteine 2. The 186-residue stretch at 2 to 187 (CGICCVVALS…ASGIFKMDLR (186 aa)) folds into the Glutamine amidotransferase type-2 domain. The 317-residue stretch at 291-607 (QFIDVLDEAV…GLEAASILPK (317 aa)) folds into the Asparagine synthetase domain.

This Gallus gallus (Chicken) protein is Asparagine synthetase domain-containing protein 1 (ASNSD1).